An 89-amino-acid polypeptide reads, in one-letter code: Arminin 7519 (89 aa).

An N-terminal signal peptide occupies residues 1–18; that stretch reads MRSTFAVLFLALIALTYS. Residues 19-59 constitute a propeptide that is removed on maturation; it reads KNYQDVKEEIKNEVENEILRDLGEDDDELDDNAQEAVNDAR. A86 is modified (alanine amide).

It belongs to the arminin family. As to expression, expressed in entodermal epithelium along the body column.

The protein localises to the secreted. The protein resides in the target cell membrane. Antimicrobial peptide with a broad-spectrum antimicrobial activity. Keeps its antibacterial activity under a wide range of salt concentrations that mimic physiological conditions of human blood, which is surprising, since Hydra is an obligate freshwater animal with nearly no salt tolerance. Does not affect red blood cells. The protein is Arminin 7519 of Hydra vulgaris (Hydra).